The chain runs to 425 residues: Serine--tRNA ligase (425 aa).

L-serine is bound at residue 229 to 231; that stretch reads TAE. 260–262 lines the ATP pocket; the sequence is RSE. Glu283 lines the L-serine pocket. 347–350 contacts ATP; that stretch reads EISS. Ser384 contributes to the L-serine binding site.

The protein belongs to the class-II aminoacyl-tRNA synthetase family. Type-1 seryl-tRNA synthetase subfamily. As to quaternary structure, homodimer. The tRNA molecule binds across the dimer.

The protein resides in the cytoplasm. The enzyme catalyses tRNA(Ser) + L-serine + ATP = L-seryl-tRNA(Ser) + AMP + diphosphate + H(+). It carries out the reaction tRNA(Sec) + L-serine + ATP = L-seryl-tRNA(Sec) + AMP + diphosphate + H(+). The protein operates within aminoacyl-tRNA biosynthesis; selenocysteinyl-tRNA(Sec) biosynthesis; L-seryl-tRNA(Sec) from L-serine and tRNA(Sec): step 1/1. Its function is as follows. Catalyzes the attachment of serine to tRNA(Ser). Is also able to aminoacylate tRNA(Sec) with serine, to form the misacylated tRNA L-seryl-tRNA(Sec), which will be further converted into selenocysteinyl-tRNA(Sec). This Rhizorhabdus wittichii (strain DSM 6014 / CCUG 31198 / JCM 15750 / NBRC 105917 / EY 4224 / RW1) (Sphingomonas wittichii) protein is Serine--tRNA ligase.